A 229-amino-acid chain; its full sequence is Protein ras-2 (229 aa).

Position 15–22 (15–22 (GDGGVGKT)) interacts with GTP. Positions 37 to 45 (YDPTIEDSY) match the Effector region motif. 62–66 (DTAGQ) contacts GTP. Residues 109 to 132 (KESTSSPSAYPGSSPLAATNPSAP) form a disordered region. A compositionally biased stretch (low complexity) spans 111–126 (STSSPSAYPGSSPLAA). 140-143 (NKSD) contacts GTP. The interval 188–229 (LRKQRQQGQSTPRALPPSGNSKSEKYSGTEKPKRPRGKCLII) is disordered. Residues 209–219 (KSEKYSGTEKP) show a composition bias toward basic and acidic residues. The span at 220–229 (KRPRGKCLII) shows a compositional bias: basic residues. At cysteine 226 the chain carries Cysteine methyl ester. A lipid anchor (S-farnesyl cysteine) is attached at cysteine 226. Positions 227–229 (LII) are cleaved as a propeptide — removed in mature form.

The protein belongs to the small GTPase superfamily. Ras family.

It is found in the cell membrane. The enzyme catalyses GTP + H2O = GDP + phosphate + H(+). Its function is as follows. Ras proteins bind GDP/GTP and possess intrinsic GTPase activity. The protein is Protein ras-2 (ras-2) of Neurospora crassa (strain ATCC 24698 / 74-OR23-1A / CBS 708.71 / DSM 1257 / FGSC 987).